Reading from the N-terminus, the 74-residue chain is Protein SlyX homolog (74 aa).

The protein belongs to the SlyX family.

The chain is Protein SlyX homolog from Neisseria meningitidis serogroup C (strain 053442).